Here is a 1146-residue protein sequence, read N- to C-terminus: Large proline-rich protein BAG6 (1146 aa).

Met-1 is modified (N-acetylmethionine). In terms of domain architecture, Ubiquitin-like spans Leu-17–Thr-92. Disordered regions lie at residues Arg-87–Asn-128, Arg-186–Pro-268, Thr-381–Pro-436, Gln-457–Gly-525, and Pro-555–Asp-618. The residue at position 96 (Ser-96) is a Phosphoserine. Residues Ser-96–Thr-108 show a composition bias toward low complexity. Positions His-109–Ala-122 are enriched in gly residues. Residue Thr-117 is modified to Phosphothreonine. The span at Val-208–Pro-217 shows a compositional bias: polar residues. Repeat copies occupy residues Arg-236–His-265 and Pro-410–Val-438. The segment at Arg-236–Val-650 is 4 X 29 AA approximate repeats. Pro residues predominate over residues Thr-239–Ala-257. The segment covering Gly-394 to Ala-413 has biased composition (low complexity). Composition is skewed to pro residues over residues Ala-422 to Thr-433 and Pro-502 to Pro-515. Low complexity-rich tracts occupy residues Pro-555–Pro-573 and Pro-583–Pro-601. 2 repeat units span residues Ser-589–Ala-616 and Ser-622–Val-650. The segment covering Pro-603 to Pro-614 has biased composition (pro residues). Disordered stretches follow at residues Ala-666–Pro-711 and Pro-961–Pro-1146. Pro residues predominate over residues Ala-670–Ser-694. Residues Thr-977 to Ala-986 are compositionally biased toward basic and acidic residues. Ser-978 and Ser-987 each carry phosphoserine. Over residues Ala-1021–Pro-1034 the composition is skewed to low complexity. The tract at residues Trp-1024–Asp-1054 is required for interaction with GET4. The Nuclear localization site motif lies at Ala-1026–Met-1068. The sufficient for the delivery of client proteins to the endoplasmic reticulum stretch occupies residues Ile-1036–Pro-1146. Residue Thr-1067 is modified to Phosphothreonine. The BAG-similar domain, required and sufficient for interaction with UBL4A stretch occupies residues Gly-1072–Asn-1129. Low complexity predominate over residues Ala-1080–Ala-1090. Phosphoserine occurs at positions 1095 and 1131.

Component of the BAG6/BAT3 complex, also named BAT3 complex, at least composed of BAG6, UBL4A and GET4/TRC35. Interacts with GET4; the interaction is direct and localizes BAG6 in the cytosol. Interacts with UBL4A; the interaction is direct and required for UBL4A protein stability. Interacts with AIFM1. Interacts with HSPA2. Interacts with CTCFL. Interacts with p300/EP300. Interacts (via ubiquitin-like domain) with RNF126; required for BAG6-dependent ubiquitination of proteins mislocalized to the cytosol. Interacts (via ubiquitin-like domain) with SGTA; SGTA competes with RNF126 by binding the same region of BAG6, thereby promoting deubiquitination of BAG6-target proteins and rescuing them from degradation. Interacts with ricin A chain. Interacts with VCP and AMFR; both form the VCP/p97-AMFR/gp78 complex. Interacts with SYVN1. Interacts with USP13; the interaction is direct and may mediate UBL4A deubiquitination. Interacts with ZFAND2B. Interacts with KPNA2. Interacts with UBQLN4. Ricin can induce a cleavage by the caspase CASP3. The released C-terminal peptide induces apoptosis.

It is found in the cytoplasm. It localises to the cytosol. The protein localises to the nucleus. The protein resides in the secreted. Its subcellular location is the extracellular exosome. In terms of biological role, ATP-independent molecular chaperone preventing the aggregation of misfolded and hydrophobic patches-containing proteins. Functions as part of a cytosolic protein quality control complex, the BAG6/BAT3 complex, which maintains these client proteins in a soluble state and participates in their proper delivery to the endoplasmic reticulum or alternatively can promote their sorting to the proteasome where they undergo degradation. The BAG6/BAT3 complex is involved in the post-translational delivery of tail-anchored/type II transmembrane proteins to the endoplasmic reticulum membrane. Recruited to ribosomes, it interacts with the transmembrane region of newly synthesized tail-anchored proteins and together with SGTA and ASNA1 mediates their delivery to the endoplasmic reticulum. Client proteins that cannot be properly delivered to the endoplasmic reticulum are ubiquitinated by RNF126, an E3 ubiquitin-protein ligase associated with BAG6 and are sorted to the proteasome. SGTA which prevents the recruitment of RNF126 to BAG6 may negatively regulate the ubiquitination and the proteasomal degradation of client proteins. Similarly, the BAG6/BAT3 complex also functions as a sorting platform for proteins of the secretory pathway that are mislocalized to the cytosol either delivering them to the proteasome for degradation or to the endoplasmic reticulum. The BAG6/BAT3 complex also plays a role in the endoplasmic reticulum-associated degradation (ERAD), a quality control mechanism that eliminates unwanted proteins of the endoplasmic reticulum through their retrotranslocation to the cytosol and their targeting to the proteasome. It maintains these retrotranslocated proteins in an unfolded yet soluble state condition in the cytosol to ensure their proper delivery to the proteasome. BAG6 is also required for selective ubiquitin-mediated degradation of defective nascent chain polypeptides by the proteasome. In this context, it may participate in the production of antigenic peptides and play a role in antigen presentation in immune response. BAG6 is also involved in endoplasmic reticulum stress-induced pre-emptive quality control, a mechanism that selectively attenuates the translocation of newly synthesized proteins into the endoplasmic reticulum and reroutes them to the cytosol for proteasomal degradation. BAG6 may ensure the proper degradation of these proteins and thereby protects the endoplasmic reticulum from protein overload upon stress. By inhibiting the polyubiquitination and subsequent proteasomal degradation of HSPA2 it may also play a role in the assembly of the synaptonemal complex during spermatogenesis. Also positively regulates apoptosis by interacting with and stabilizing the proapoptotic factor AIFM1. By controlling the steady-state expression of the IGF1R receptor, indirectly regulates the insulin-like growth factor receptor signaling pathway. Functionally, involved in DNA damage-induced apoptosis: following DNA damage, accumulates in the nucleus and forms a complex with p300/EP300, enhancing p300/EP300-mediated p53/TP53 acetylation leading to increase p53/TP53 transcriptional activity. When nuclear, may also act as a component of some chromatin regulator complex that regulates histone 3 'Lys-4' dimethylation (H3K4me2). Its function is as follows. Released extracellularly via exosomes, it is a ligand of the natural killer/NK cells receptor NCR3 and stimulates NK cells cytotoxicity. It may thereby trigger NK cells cytotoxicity against neighboring tumor cells and immature myeloid dendritic cells (DC). May mediate ricin-induced apoptosis. The chain is Large proline-rich protein BAG6 from Rattus norvegicus (Rat).